A 279-amino-acid polypeptide reads, in one-letter code: MKRKTSPILSWLLTIGFAFIAFIAVFPLLNLILASFRPSTELMRNGITLIFDPSTLTLDNFIYIFTEAGLYWTWFGNSVWISIVIVVLSLLFSSMVGYALAVYDFKGRNFFFLLVLIILMIPFEILMLPLFQLMIKLQLVNTYTAVILPAIVAPIAVFFFRQYALGLPKELMDAARIDGCTEYGIFFKIMLPLMGPSLAAMAILQGLNSWNNFLWPLVVLRSNDMFTLPIGLATLLTPYGNNYDILLAGSVMTIVPIVILFIFFQRYFIAGLTVGGVKG.

The next 6 membrane-spanning stretches (helical) occupy residues 8–28 (ILSW…VFPL), 79–99 (VWIS…VGYA), 110–130 (FFFL…MLPL), 140–160 (VNTY…VFFF), 184–204 (GIFF…MAIL), and 245–265 (ILLA…IFFQ). Residues 75-264 (FGNSVWISIV…VPIVILFIFF (190 aa)) form the ABC transmembrane type-1 domain.

The protein belongs to the binding-protein-dependent transport system permease family. MalFG subfamily. As to quaternary structure, the complex is composed of two ATP-binding proteins (MsmX), two transmembrane proteins (AraP and AraQ) and a solute-binding protein (AraN).

The protein resides in the cell membrane. Part of the ABC transporter complex AraNPQ involved in the uptake of arabinooligosaccharides. Responsible for the translocation of the substrate across the membrane. The chain is Arabinooligosaccharides transport system permease protein AraQ (araQ) from Halalkalibacterium halodurans (strain ATCC BAA-125 / DSM 18197 / FERM 7344 / JCM 9153 / C-125) (Bacillus halodurans).